Reading from the N-terminus, the 299-residue chain is Kynurenine formamidase-like hydrolase fscH (299 aa).

Residues 48 to 52 carry the HGGXW motif; sequence HGGAW. Positions 90 to 110 are disordered; that stretch reads SPRTPSQPVPSGGHVGGEQQA. Ser142 serves as the catalytic Nucleophile.

The protein belongs to the kynurenine formamidase family.

Its pathway is secondary metabolite biosynthesis. In terms of biological role, kynurenine formamidase-like hydrolase; part of the fragmented gene cluster that mediates the biosynthesis of fusarochromene, a tryptophan-derived metabolite closely related to a group of mycotoxins including fusarochromanone. Within the pathway, fscH converts the product of fscD into 4-hydroxykyrunenine. The first step of the pathway is the epimerization of L-tryptophan to D-tryptophan in the presence of the NRPS-like tryptophan epimerase fscC. D-tryptophan is subsequently hydroxylated by the tryptophan 6-hydroxylase fscE to yield 6-hydroxytryptophan. The pyrrole ring undergoes cleavaged by the tryptophan 2,3-dioxygenase fscD and is finally converted to 4-hydroxykyrunenine by the hydrolase fscH. The NRPS-like oxidoreductase fscA reduces the carboxyl group to primary alcohol and the DMATS-type prenyltransferase fscG performs prenylation, followed by the formation of a chromene ring catalyzed by the oxidoreductase fscI, which leads to desacetylfusarochromene. Epoxidation by fscF and rearrangement reactions of chromene double bonds convert compound desacetylfusarochromene to fusarochromanones. Although specific acetyltransferases were not found near the fsc gene cluster, several predicted enzymes containing the N-acetyltransferase superfamily domain are present in the genome of F.equiseti. These predicted enzymes may have the potential to convert desacetylfusarochromene to fusarochromene. The sequence is that of Kynurenine formamidase-like hydrolase fscH from Fusarium equiseti (Fusarium scirpi).